A 183-amino-acid chain; its full sequence is Putative NAD(P)H nitroreductase YdjA (183 aa).

Residues 10–12 (RRS), arginine 35, and histidine 39 contribute to the FMN site. 121 to 126 (AAVAQG) is a binding site for NAD(+). 131-133 (WRS) provides a ligand contact to FMN.

This sequence belongs to the nitroreductase family. As to quaternary structure, homodimer. It depends on FMN as a cofactor.

The protein is Putative NAD(P)H nitroreductase YdjA (ydjA) of Escherichia coli O157:H7.